A 388-amino-acid chain; its full sequence is Chitinase 4 (388 aa).

The GH18 domain maps to 22 to 375; that stretch reads FKTCVYFSNW…KNFVDQLGGV (354 aa). 2 N-linked (GlcNAc...) asparagine glycosylation sites follow: Asn30 and Asn82. Chitin contacts are provided by residues 82-83 and 109-112; these read NQ and GGWG. N-linked (GlcNAc...) asparagine glycosylation is found at Asn123 and Asn132. Residue Glu151 is the Proton donor of the active site. Residue Tyr152 participates in chitin binding. Asn155 is a glycosylation site (N-linked (GlcNAc...) asparagine). 208-211 provides a ligand contact to chitin; that stretch reads MCYD. Asn237 carries N-linked (GlcNAc...) asparagine glycosylation. Trp350 lines the chitin pocket.

It belongs to the glycosyl hydrolase 18 family. Chitinase class V subfamily.

It localises to the secreted. It catalyses the reaction Random endo-hydrolysis of N-acetyl-beta-D-glucosaminide (1-&gt;4)-beta-linkages in chitin and chitodextrins.. Its function is as follows. Chitinase involved in the remodeling of chitin in the fungal cell wall. Plays a role in sporulation. The sequence is that of Chitinase 4 (CHT4) from Candida albicans (strain SC5314 / ATCC MYA-2876) (Yeast).